The chain runs to 223 residues: Ribonuclease S-2 (223 aa).

Residues 1 to 22 (MAKSQLVSALFVFFFSLSPIYG) form the signal peptide. Cys-38 and Cys-44 are joined by a disulfide. Asn-51 carries an N-linked (GlcNAc...) asparagine glycan. The active-site Proton donor is His-55. RNA-binding positions include His-55 and 94-95 (QL). Intrachain disulfides connect Cys-71-Cys-119, Cys-178-Cys-211, and Cys-194-Cys-205. Gln-112 is an active-site residue. Position 115–116 (115–116 (KH)) interacts with RNA. The active-site Proton acceptor is the His-116.

It belongs to the RNase T2 family. As to expression, pistil.

It is found in the secreted. It localises to the extracellular space. It catalyses the reaction a ribonucleotidyl-ribonucleotide-RNA + H2O = a 3'-end 3'-phospho-ribonucleotide-RNA + a 5'-end dephospho-ribonucleoside-RNA + H(+). Its function is as follows. Self-incompatibility (SI) is the inherited ability of a flowering plant to prevent self-fertilization by discriminating between self and non-self pollen during pollination. In many species of the Solanaceae, self-incompatibility is controlled by the single, multiallelic locus S. This stylar glycoprotein is associated with expression of self-incompatibility in potato. This is Ribonuclease S-2 from Solanum tuberosum (Potato).